Reading from the N-terminus, the 1321-residue chain is Insulin receptor substrate 2 (1321 aa).

The segment covering 1–10 (MASAPLPGPP) has biased composition (pro residues). Disordered stretches follow at residues 1–32 (MASA…HSVR) and 51–73 (RGPG…PPRL). Residues 16 to 144 (DGPNLNNNNN…WYRALTDLVS (129 aa)) enclose the PH domain. Residues 18–28 (PNLNNNNNNNN) show a composition bias toward low complexity. The region spanning 191-295 (YREVWQVNLK…EAMKALKELF (105 aa)) is the IRS-type PTB domain. The disordered stretch occupies residues 299–536 (PRSKSQSSGS…ARDGSGGELY (238 aa)). Ser-303 and Ser-343 each carry phosphoserine. Residue Thr-347 is modified to Phosphothreonine. Phosphoserine is present on Ser-362. Residues 364–376 (GDGGAAGGAGTAG) are compositionally biased toward gly residues. 3 positions are modified to phosphoserine: Ser-381, Ser-385, and Ser-388. Position 409 is an omega-N-methylarginine (Arg-409). 2 stretches are compositionally biased toward low complexity: residues 435–456 (SPPA…SGSY) and 478–490 (PSSG…GSPS). Position 517 is a phosphothreonine (Thr-517). A Phosphoserine modification is found at Ser-520. The residue at position 524 (Thr-524) is a Phosphothreonine. Tyr-536 carries the phosphotyrosine; by INSR modification. Positions 536–539 (YGYM) match the YXXM motif 1 motif. Phosphoserine; by PLK1 is present on Ser-556. Ser-573 is modified (phosphoserine). Residues Thr-575 and Thr-576 each carry the phosphothreonine modification. A Phosphoserine modification is found at Ser-590. Residues 594-597 (YTLM) carry the YXXM motif 2 motif. Residues Ser-604 and Ser-616 each carry the phosphoserine modification. Tyr-649 is subject to Phosphotyrosine. Short sequence motifs (YXXM motif) lie at residues 649 to 652 (YMPM) and 671 to 674 (YMPM). Tyr-671 carries the post-translational modification Phosphotyrosine; by INSR. Residues Ser-675, Ser-678, Ser-727, and Ser-728 each carry the phosphoserine modification. A YXXM motif 5 motif is present at residues 734-737 (YMRM). Ser-762 carries the phosphoserine modification. Position 771 is a phosphothreonine (Thr-771). Ser-796 bears the Phosphoserine mark. Positions 814–817 (YVLM) match the YXXM motif 6 motif. Ser-819 is subject to Phosphoserine. Disordered regions lie at residues 834-871 (ATPG…RPEG) and 888-1091 (EGLQ…ASPT). Position 907 is a phosphoserine (Ser-907). Tyr-911 is modified (phosphotyrosine; by INSR). Positions 930-959 (LLASAASSSSLLSASSPASSLGSGTPGTSS) are enriched in low complexity. The residue at position 965 (Ser-965) is a Phosphoserine. The residue at position 970 (Tyr-970) is a Phosphotyrosine; by INSR. Pro residues predominate over residues 1005 to 1014 (PYPPLPPRPS). Positions 1039 to 1055 (AATSQGPTAGSSMSSEP) are enriched in polar residues. The YXXM motif 7 motif lies at 1061 to 1064 (YTEM). Position 1071 is a phosphothreonine (Thr-1071). A compositionally biased stretch (pro residues) spans 1072-1082 (PPQPIVAPPKP). Ser-1089 carries the post-translational modification Phosphoserine. Phosphoserine; by PLK1 is present on Ser-1098. The disordered stretch occupies residues 1110 to 1198 (LQVSQPPDPH…TSPGQAQPLV (89 aa)). Residues 1139-1154 (ETFSSTTTVTPVSPSF) show a composition bias toward low complexity. At Thr-1148 the chain carries Phosphothreonine. Phosphoserine is present on residues Ser-1151, Ser-1163, Ser-1165, Ser-1175, and Ser-1190. A compositionally biased stretch (polar residues) spans 1163–1179 (SASVENVSLRKSSEGSS). Tyr-1242 bears the Phosphotyrosine; by INSR mark. Residues 1251-1275 (QGSLAQSQPQPGDKNSWSRTRSLGG) form a disordered region. The segment covering 1253-1271 (SLAQSQPQPGDKNSWSRTR) has biased composition (polar residues). Residue Tyr-1303 is modified to Phosphotyrosine; by INSR. A Glycyl lysine isopeptide (Lys-Gly) (interchain with G-Cter in ubiquitin) cross-link involves residue Lys-1314.

In terms of assembly, interacts with PHIP. Interacts with SH2B1; this interaction enhances leptin-induced activation of the PI3-kinase pathway. Interacts with GRB2. Interacts with PIK3R1. Interacts with DVL2; this interaction promotes the Wnt/beta-catenin signaling pathway. Phosphorylation fluctuates in a cell-cycle dependent manner with hyperphosphorylation during mitosis. Phosphorylated at Ser-556 and Ser-1098 by PLK1; these phosphorylations prevent the activation of the PI3K pathway upon growth factor stimulation by inhibiting the binding between IRS2 and the PI3K pathway components and increasing the level of IRS2 protein degradation. In addition, they prevent premature mitotic exit. Post-translationally, monoubiquitinated by NEDD4; leading to enhanced IGF1 signaling. During cell cycle, ubiquitination and proteasomal degradation are controlled by FZR1. As to expression, skeletal muscle, lung, brain, liver, kidney, heart and spleen.

The protein resides in the cytoplasm. It is found in the cytosol. In terms of biological role, signaling adapter protein that participates in the signal transduction from two prominent receptor tyrosine kinases, insulin receptor/INSR and insulin-like growth factor I receptor/IGF1R. Plays therefore an important role in development, growth, glucose homeostasis as well as lipid metabolism. Upon phosphorylation by the insulin receptor, functions as a signaling scaffold that propagates insulin action through binding to SH2 domain-containing proteins including the p85 regulatory subunit of PI3K, NCK1, NCK2, GRB2 or SHP2. Recruitment of GRB2 leads to the activation of the guanine nucleotide exchange factor SOS1 which in turn triggers the Ras/Raf/MEK/MAPK signaling cascade. Activation of the PI3K/AKT pathway is responsible for most of insulin metabolic effects in the cell, and the Ras/Raf/MEK/MAPK is involved in the regulation of gene expression and in cooperation with the PI3K pathway regulates cell growth and differentiation. Acts a positive regulator of the Wnt/beta-catenin signaling pathway through suppression of DVL2 autophagy-mediated degradation leading to cell proliferation. Plays a role in cell cycle progression by promoting a robust spindle assembly checkpoint (SAC) during M-phase. In macrophages, IL4-induced tyrosine phosphorylation of IRS2 leads to the recruitment and activation of phosphoinositide 3-kinase (PI3K). This Mus musculus (Mouse) protein is Insulin receptor substrate 2 (Irs2).